Reading from the N-terminus, the 146-residue chain is Cyanate hydratase (146 aa).

Residues Arg-87, Glu-90, and Ser-113 contribute to the active site.

It belongs to the cyanase family.

The enzyme catalyses cyanate + hydrogencarbonate + 3 H(+) = NH4(+) + 2 CO2. Its function is as follows. Catalyzes the reaction of cyanate with bicarbonate to produce ammonia and carbon dioxide. The polypeptide is Cyanate hydratase (Teredinibacter turnerae (strain ATCC 39867 / T7901)).